Reading from the N-terminus, the 951-residue chain is Glycine dehydrogenase (decarboxylating) 1 (951 aa).

At Lys703 the chain carries N6-(pyridoxal phosphate)lysine.

This sequence belongs to the GcvP family. In terms of assembly, the glycine cleavage system is composed of four proteins: P, T, L and H. The cofactor is pyridoxal 5'-phosphate.

The enzyme catalyses N(6)-[(R)-lipoyl]-L-lysyl-[glycine-cleavage complex H protein] + glycine + H(+) = N(6)-[(R)-S(8)-aminomethyldihydrolipoyl]-L-lysyl-[glycine-cleavage complex H protein] + CO2. In terms of biological role, the glycine cleavage system catalyzes the degradation of glycine. The P protein binds the alpha-amino group of glycine through its pyridoxal phosphate cofactor; CO(2) is released and the remaining methylamine moiety is then transferred to the lipoamide cofactor of the H protein. The sequence is that of Glycine dehydrogenase (decarboxylating) 1 (gcvP1) from Pseudomonas putida (strain ATCC 47054 / DSM 6125 / CFBP 8728 / NCIMB 11950 / KT2440).